The primary structure comprises 272 residues: Protein alcS (272 aa).

Residues M1 to T14 are compositionally biased toward polar residues. Positions M1 to A21 are disordered. The next 6 helical transmembrane spans lie at P63 to W83, I91 to L111, V122 to A144, F164 to A184, V192 to W212, and L225 to V245.

The protein belongs to the acetate uptake transporter (AceTr) (TC 2.A.96) family.

The protein resides in the cell membrane. It is found in the cell septum. In Aspergillus fumigatus (strain CBS 144.89 / FGSC A1163 / CEA10) (Neosartorya fumigata), this protein is Protein alcS.